The following is a 354-amino-acid chain: Probable tartrate dehydrogenase/decarboxylase (354 aa).

Residues aspartate 221, aspartate 245, and aspartate 249 each coordinate Mn(2+).

Belongs to the isocitrate and isopropylmalate dehydrogenases family. Requires Mg(2+) as cofactor. Mn(2+) is required as a cofactor. It depends on K(+) as a cofactor.

The enzyme catalyses tartrate + NAD(+) = 2-hydroxy-3-oxosuccinate + NADH + H(+). It catalyses the reaction (2R,3S)-tartrate + NAD(+) = 2-hydroxy-3-oxosuccinate + NADH + H(+). It carries out the reaction (2R,3R)-tartrate + NAD(+) = 2-hydroxy-3-oxosuccinate + NADH + H(+). The catalysed reaction is (2R,3R)-tartrate + H(+) = (R)-glycerate + CO2. The enzyme catalyses (R)-malate + NAD(+) = pyruvate + CO2 + NADH. Has multiple catalytic activities. Apart from catalyzing the oxidation of (+)-tartrate to oxaloglycolate, also converts meso-tartrate to D-glycerate and catalyzes the oxidative decarboxylation of D-malate to pyruvate. This chain is Probable tartrate dehydrogenase/decarboxylase (ycsA), found in Bacillus subtilis (strain 168).